A 244-amino-acid polypeptide reads, in one-letter code: 1-(5-phosphoribosyl)-5-[(5-phosphoribosylamino)methylideneamino] imidazole-4-carboxamide isomerase (244 aa).

D10 functions as the Proton acceptor in the catalytic mechanism. The active-site Proton donor is the D132.

It belongs to the HisA/HisF family.

The protein localises to the cytoplasm. It carries out the reaction 1-(5-phospho-beta-D-ribosyl)-5-[(5-phospho-beta-D-ribosylamino)methylideneamino]imidazole-4-carboxamide = 5-[(5-phospho-1-deoxy-D-ribulos-1-ylimino)methylamino]-1-(5-phospho-beta-D-ribosyl)imidazole-4-carboxamide. It functions in the pathway amino-acid biosynthesis; L-histidine biosynthesis; L-histidine from 5-phospho-alpha-D-ribose 1-diphosphate: step 4/9. In Xanthomonas axonopodis pv. citri (strain 306), this protein is 1-(5-phosphoribosyl)-5-[(5-phosphoribosylamino)methylideneamino] imidazole-4-carboxamide isomerase.